A 453-amino-acid chain; its full sequence is UDP-N-acetylmuramoylalanine--D-glutamate ligase (453 aa).

119 to 125 (GTNGKTT) contacts ATP.

The protein belongs to the MurCDEF family.

It localises to the cytoplasm. It carries out the reaction UDP-N-acetyl-alpha-D-muramoyl-L-alanine + D-glutamate + ATP = UDP-N-acetyl-alpha-D-muramoyl-L-alanyl-D-glutamate + ADP + phosphate + H(+). The protein operates within cell wall biogenesis; peptidoglycan biosynthesis. In terms of biological role, cell wall formation. Catalyzes the addition of glutamate to the nucleotide precursor UDP-N-acetylmuramoyl-L-alanine (UMA). The sequence is that of UDP-N-acetylmuramoylalanine--D-glutamate ligase from Syntrophus aciditrophicus (strain SB).